We begin with the raw amino-acid sequence, 161 residues long: Photosystem II extrinsic protein V (161 aa).

An N-terminal signal peptide occupies residues 1 to 25 (MKKFFISVVFIVLLTFTTFINSATA). Heme c is bound by residues Cys-61, Cys-64, His-65, and His-116.

It belongs to the cytochrome c family. PsbV subfamily. In terms of assembly, PSII is composed of 1 copy each of membrane proteins PsbA, PsbB, PsbC, PsbD, PsbE, PsbF, PsbH, PsbI, PsbJ, PsbK, PsbL, PsbM, PsbT, PsbX, PsbY, PsbZ, Psb30/Ycf12, peripheral proteins PsbO, CyanoQ (PsbQ), PsbU, PsbV and a large number of cofactors. It forms dimeric complexes. The cofactor is heme c.

It localises to the cellular thylakoid membrane. Its function is as follows. One of the extrinsic, lumenal subunits of photosystem II (PSII). PSII is a light-driven water plastoquinone oxidoreductase, using light energy to abstract electrons from H(2)O, generating a proton gradient subsequently used for ATP formation. The extrinsic proteins stabilize the structure of photosystem II oxygen-evolving complex (OEC), the ion environment of oxygen evolution and protect the OEC against heat-induced inactivation. Low-potential cytochrome c that plays a role in the OEC of PSII. The chain is Photosystem II extrinsic protein V from Trichodesmium erythraeum (strain IMS101).